The primary structure comprises 267 residues: MRVREPAVAGTFYPKDKEELNKLMDLLCGFEPKEKIKPKAILVPHAGYIYSGKTACEVYKRIEIPEKVVLLGPNHTGLGKPISVYSGDAWETPYGVVEIDGELREKILKYPYANPDEYAHLYEHSLEVQLPFLQRYARREFKILPIVVTFVEYEVAKDFGRFLGEVLKEEDALIVISSDMSHYVPAEEARKKDEILISAMERLNTEELYFKAVQYNITMCGVVPAVVGIESAKVLGATKGIVVDYSNSGDTTGDYSQVVAYLGMIFL.

Belongs to the MEMO1 family.

In Aquifex aeolicus (strain VF5), this protein is MEMO1 family protein aq_890.